The following is a 255-amino-acid chain: Small ribosomal subunit protein uS2 (255 aa).

Residues arginine 231–alanine 255 form a disordered region. The segment covering alanine 236–alanine 255 has biased composition (acidic residues).

The protein belongs to the universal ribosomal protein uS2 family.

The polypeptide is Small ribosomal subunit protein uS2 (Citrifermentans bemidjiense (strain ATCC BAA-1014 / DSM 16622 / JCM 12645 / Bem) (Geobacter bemidjiensis)).